We begin with the raw amino-acid sequence, 680 residues long: tRNA 5-methylaminomethyl-2-thiouridine biosynthesis bifunctional protein MnmC (680 aa).

The segment at 1-267 (MTAEPNKPCQ…MAAILSSDAP (267 aa)) is tRNA (mnm(5)s(2)U34)-methyltransferase. The segment at 273-680 (IGGGLASAHL…LRKLLKGKAL (408 aa)) is FAD-dependent cmnm(5)s(2)U34 oxidoreductase.

It in the N-terminal section; belongs to the methyltransferase superfamily. tRNA (mnm(5)s(2)U34)-methyltransferase family. In the C-terminal section; belongs to the DAO family. FAD serves as cofactor.

The protein resides in the cytoplasm. It carries out the reaction 5-aminomethyl-2-thiouridine(34) in tRNA + S-adenosyl-L-methionine = 5-methylaminomethyl-2-thiouridine(34) in tRNA + S-adenosyl-L-homocysteine + H(+). Catalyzes the last two steps in the biosynthesis of 5-methylaminomethyl-2-thiouridine (mnm(5)s(2)U) at the wobble position (U34) in tRNA. Catalyzes the FAD-dependent demodification of cmnm(5)s(2)U34 to nm(5)s(2)U34, followed by the transfer of a methyl group from S-adenosyl-L-methionine to nm(5)s(2)U34, to form mnm(5)s(2)U34. This chain is tRNA 5-methylaminomethyl-2-thiouridine biosynthesis bifunctional protein MnmC, found in Shewanella putrefaciens (strain CN-32 / ATCC BAA-453).